Reading from the N-terminus, the 772-residue chain is Acylamino-acid-releasing enzyme 2 (772 aa).

Residues serine 617, aspartate 708, and histidine 740 each act as charge relay system in the active site.

It belongs to the peptidase S9C family. Homotetramer.

It is found in the cytoplasm. It catalyses the reaction Cleavage of an N-acetyl or N-formyl amino acid from the N-terminus of a polypeptide.. Its function is as follows. Catalyzes the hydrolysis of the N-terminal peptide bond of an N-acetylated peptide to generate an N-acetylated amino acid and a peptide with a free N-terminus. The polypeptide is Acylamino-acid-releasing enzyme 2 (Oryza sativa subsp. japonica (Rice)).